The following is a 440-amino-acid chain: Trigger factor (440 aa).

In terms of domain architecture, PPIase FKBP-type spans 163-248; the sequence is GEIVSVTFEA…VHVIKERTLP (86 aa).

This sequence belongs to the FKBP-type PPIase family. Tig subfamily.

The protein resides in the cytoplasm. It catalyses the reaction [protein]-peptidylproline (omega=180) = [protein]-peptidylproline (omega=0). Involved in protein export. Acts as a chaperone by maintaining the newly synthesized protein in an open conformation. Functions as a peptidyl-prolyl cis-trans isomerase. In Solidesulfovibrio magneticus (strain ATCC 700980 / DSM 13731 / RS-1) (Desulfovibrio magneticus), this protein is Trigger factor.